The chain runs to 361 residues: Chorismate synthase (361 aa).

NADP(+) contacts are provided by arginine 48 and arginine 54. FMN-binding positions include 125 to 127 (RSS), 238 to 239 (NA), glycine 278, 293 to 297 (KPTSS), and arginine 319.

The protein belongs to the chorismate synthase family. In terms of assembly, homotetramer. The cofactor is FMNH2.

The catalysed reaction is 5-O-(1-carboxyvinyl)-3-phosphoshikimate = chorismate + phosphate. It functions in the pathway metabolic intermediate biosynthesis; chorismate biosynthesis; chorismate from D-erythrose 4-phosphate and phosphoenolpyruvate: step 7/7. Its function is as follows. Catalyzes the anti-1,4-elimination of the C-3 phosphate and the C-6 proR hydrogen from 5-enolpyruvylshikimate-3-phosphate (EPSP) to yield chorismate, which is the branch point compound that serves as the starting substrate for the three terminal pathways of aromatic amino acid biosynthesis. This reaction introduces a second double bond into the aromatic ring system. This chain is Chorismate synthase, found in Photorhabdus laumondii subsp. laumondii (strain DSM 15139 / CIP 105565 / TT01) (Photorhabdus luminescens subsp. laumondii).